Here is a 552-residue protein sequence, read N- to C-terminus: Transcription factor kayak (552 aa).

Disordered stretches follow at residues 110–145 and 177–234; these read LAQG…TDST and GAAS…KRRV. Residues 111-127 are compositionally biased toward polar residues; that stretch reads AQGSDSEDSNASYNDTQ. Over residues 135-145 the composition is skewed to low complexity; it reads TDTSSAHTDST. The span at 177 to 192 shows a compositional bias: polar residues; sequence GAASVGSSNANTSNTP. The 64-residue stretch at 212 to 275 folds into the bZIP domain; it reads EQKRAVRRER…NQLEYCLAAH (64 aa). The basic motif stretch occupies residues 214–233; the sequence is KRAVRRERNKQAAARCRKRR. The leucine-zipper stretch occupies residues 240-247; that stretch reads LTEEVEQL. Residues 304-325 are compositionally biased toward low complexity; it reads AGSSGSGASSHHNHNSNDSSNG. Disordered stretches follow at residues 304–346, 365–390, and 514–552; these read AGSS…PLDL, LDGA…TLPP, and GGTG…LVSL. Positions 333 to 343 are enriched in polar residues; sequence TLNSTGRSNSP. Residue S342 is modified to Phosphoserine.

Belongs to the bZIP family. Fos subfamily. As to quaternary structure, homodimer. Heterodimer with Jra. The kay-Jra heterodimer binds more stably to the AP-1 site than either of the two proteins alone.

It localises to the nucleus. Developmentally regulated transcription factor AP-1 binds and recognizes the enhancer DNA sequence: 5'-TGA[CG]TCA-3'. May play a role in the function or determination of a particular subset of cells in the developing embryo. It is able to carry out its function either independently of or in conjunction with Jra. This is Transcription factor kayak from Drosophila yakuba (Fruit fly).